The following is a 172-amino-acid chain: Large ribosomal subunit protein bL17 (172 aa).

Residues 127–172 (KAAKQDRAKRVKGSKKVTGDVAPAVAPVPSAPAETQEEAKAPESAE) are disordered. A compositionally biased stretch (low complexity) spans 147–159 (VAPAVAPVPSAPA). Positions 163-172 (EEAKAPESAE) are enriched in basic and acidic residues.

The protein belongs to the bacterial ribosomal protein bL17 family. As to quaternary structure, part of the 50S ribosomal subunit. Contacts protein L32.

This is Large ribosomal subunit protein bL17 from Chlorobium luteolum (strain DSM 273 / BCRC 81028 / 2530) (Pelodictyon luteolum).